The following is a 66-amino-acid chain: Large ribosomal subunit protein uL29 (66 aa).

This sequence belongs to the universal ribosomal protein uL29 family.

The sequence is that of Large ribosomal subunit protein uL29 from Bartonella tribocorum (strain CIP 105476 / IBS 506).